Consider the following 719-residue polypeptide: uncharacterized protein (719 aa).

A coiled-coil region spans residues Ile64 to Glu100. Residues Gly649–Val718 form the S1 motif domain.

This is an uncharacterized protein from Bacillus subtilis (strain 168).